A 617-amino-acid polypeptide reads, in one-letter code: ATP-dependent RNA helicase DBP1 (617 aa).

The disordered stretch occupies residues 1-90 (MADLPQKVSN…TSANYNRGGS (90 aa)). Polar residues predominate over residues 7–17 (KVSNLSINNKE). Residues 38–58 (PSFERSTPKQEDKVTGGDFFR) are compositionally biased toward basic and acidic residues. The segment covering 79 to 90 (GGTSANYNRGGS) has biased composition (polar residues). Residues 154–182 (LDFSSPPLDELLMENIKLASFTKPTPVQK) carry the Q motif motif. One can recognise a Helicase ATP-binding domain in the interval 185–374 (IPIVTKGRDL…RDFLDNYIFL (190 aa)). 198-205 (AQTGSGKT) is an ATP binding site. The DEAD box motif lies at 318–321 (DEAD). The Helicase C-terminal domain occupies 385–545 (NITQRILYVD…EVPTFLSDLS (161 aa)). Residues 542 to 617 (SDLSRQNSRG…GYGNSNASWW (76 aa)) form a disordered region. Residues 580 to 594 (FGSTRPRNTGTSNWG) are compositionally biased toward polar residues.

Belongs to the DEAD box helicase family. DDX3/DED1 subfamily.

The protein localises to the cytoplasm. It catalyses the reaction ATP + H2O = ADP + phosphate + H(+). ATP-binding RNA helicase involved in translation initiation. Remodels RNA in response to ADP and ATP concentrations by facilitating disruption, but also formation of RNA duplexes. Redundant to DED1, may be required in conditions in which DED1 expression is decreased. This chain is ATP-dependent RNA helicase DBP1 (DBP1), found in Saccharomyces cerevisiae (strain YJM789) (Baker's yeast).